A 366-amino-acid chain; its full sequence is Glucose 1-dehydrogenase 2 (366 aa).

Zn(2+) is bound at residue cysteine 39. Serine 41 contributes to the substrate binding site. 2 residues coordinate Zn(2+): histidine 66 and glutamate 67. Substrate contacts are provided by asparagine 90, glutamate 116, glutamine 152, and aspartate 156. Glutamine 152 serves as a coordination point for Zn(2+). NADP(+)-binding positions include 212-214 (NRR), 277-279 (FGF), 305-307 (LIN), and lysine 354. Asparagine 307 serves as a coordination point for substrate.

It belongs to the zinc-containing alcohol dehydrogenase family. Glucose 1-dehydrogenase subfamily. The cofactor is Zn(2+).

It carries out the reaction D-glucose + NAD(+) = D-glucono-1,5-lactone + NADH + H(+). The catalysed reaction is D-glucose + NADP(+) = D-glucono-1,5-lactone + NADPH + H(+). Functionally, catalyzes the NAD(P)(+)-dependent oxidation of D-glucose to D-gluconate via gluconolactone. Can utilize both NAD(+) and NADP(+) as electron acceptor. Is involved in the degradation of glucose through a non-phosphorylative variant of the Entner-Doudoroff pathway. This is Glucose 1-dehydrogenase 2 from Caldivirga maquilingensis (strain ATCC 700844 / DSM 13496 / JCM 10307 / IC-167).